We begin with the raw amino-acid sequence, 387 residues long: Ferrochelatase (387 aa).

The interval 1–318 (MGRVGVLLLN…VFIDALAQMV (318 aa)) is ferrochelatase. Positions 196 and 277 each coordinate Fe cation. The segment at 319–387 (MDSLNDPPCT…QGPLHFVGLL (69 aa)) is hlip domain.

In the N-terminal section; belongs to the ferrochelatase family. This sequence in the C-terminal section; belongs to the Hlip family.

Its subcellular location is the cytoplasm. It carries out the reaction heme b + 2 H(+) = protoporphyrin IX + Fe(2+). It participates in porphyrin-containing compound metabolism; protoheme biosynthesis; protoheme from protoporphyrin-IX: step 1/1. Functionally, catalyzes the ferrous insertion into protoporphyrin IX. In terms of biological role, the Hlip proteins might regulate tetrapyrrole biosynthesis, maybe at the level of aminolevulinic acid synthesis. Deletion of 4 to 5 members of the Hlip family (always including this member) suggests the proteins are involved in regulation of chlorophyll biosynthesis, in stabilization of chlorophyll-binding proteins and/or in reuse of chlorophylls, and may regulate tetrapyrrole biosynthesis. The Hlip proteins probably stabilize PSII assembly intermediates. The protein is Ferrochelatase of Synechocystis sp. (strain ATCC 27184 / PCC 6803 / Kazusa).